Consider the following 59-residue polypeptide: Putative antitoxin AF_1090 (59 aa).

The protein belongs to the UPF0165 family.

Functionally, possibly the antitoxin component of a type II toxin-antitoxin (TA) system. In Archaeoglobus fulgidus (strain ATCC 49558 / DSM 4304 / JCM 9628 / NBRC 100126 / VC-16), this protein is Putative antitoxin AF_1090.